A 398-amino-acid polypeptide reads, in one-letter code: MSKLVLVLNCGSSSLKFAVVDAENGEEHLSGLAECLHLPEARIKWKLDGKHEAQLGNGAAHEEALAFMVETILASKPELSENLAAIGHRVVHGGEQFTQSALITDDVLKGIEDCATLAPLHNPAHIIGIKAAQKSFPALKNVAVFDTAFHQTMPEESYLYALPYNLYKEHGIRRYGMHGTSHLFITREVAGLLNKPVEEVNIINCHLGNGASVCAVKNGQSVDTSMGLTPLEGLVMGTRCGDIDPAIIFHLHDTLGYSVEKINTMLTKESGLQGLTEVTSDCRFVEDNYGEKEEATRAMDVFCHRLAKYVAGYTATLDGRLDAITFTGGIGENSAPIREMVLNRLGIFGIEVDSEANLKARFGGEGVITTENSRIPAMVISTNEELVIAEDTARLAGL.

N9 is a Mg(2+) binding site. ATP is bound at residue K16. R89 is a substrate binding site. D146 serves as the catalytic Proton donor/acceptor. ATP is bound by residues 206–210 (HLGNG), 281–283 (DCR), and 329–333 (GIGEN). Mg(2+) is bound at residue E384.

It belongs to the acetokinase family. In terms of assembly, homodimer. It depends on Mg(2+) as a cofactor. The cofactor is Mn(2+).

It is found in the cytoplasm. The catalysed reaction is acetate + ATP = acetyl phosphate + ADP. It participates in metabolic intermediate biosynthesis; acetyl-CoA biosynthesis; acetyl-CoA from acetate: step 1/2. Catalyzes the formation of acetyl phosphate from acetate and ATP. Can also catalyze the reverse reaction. This chain is Acetate kinase 1, found in Vibrio parahaemolyticus serotype O3:K6 (strain RIMD 2210633).